A 330-amino-acid chain; its full sequence is Phospho-N-acetylmuramoyl-pentapeptide-transferase (330 aa).

The next 10 helical transmembrane spans lie at 3–23 (SVVL…SSFI), 49–69 (TPTM…AVVA), 71–91 (PNPA…VGLY), 111–131 (FLLL…YVGV), 145–165 (VLGP…FVIV), 179–199 (GLAA…AFLE), 204–224 (LAII…YNSH), 228–248 (IFMG…AAIL), 256–276 (PVIG…VVVF), and 307–327 (FWIV…FFLY).

This sequence belongs to the glycosyltransferase 4 family. MraY subfamily. Requires Mg(2+) as cofactor.

The protein resides in the cell membrane. The enzyme catalyses UDP-N-acetyl-alpha-D-muramoyl-L-alanyl-gamma-D-glutamyl-meso-2,6-diaminopimeloyl-D-alanyl-D-alanine + di-trans,octa-cis-undecaprenyl phosphate = di-trans,octa-cis-undecaprenyl diphospho-N-acetyl-alpha-D-muramoyl-L-alanyl-D-glutamyl-meso-2,6-diaminopimeloyl-D-alanyl-D-alanine + UMP. It participates in cell wall biogenesis; peptidoglycan biosynthesis. Catalyzes the initial step of the lipid cycle reactions in the biosynthesis of the cell wall peptidoglycan: transfers peptidoglycan precursor phospho-MurNAc-pentapeptide from UDP-MurNAc-pentapeptide onto the lipid carrier undecaprenyl phosphate, yielding undecaprenyl-pyrophosphoryl-MurNAc-pentapeptide, known as lipid I. In Rubrobacter xylanophilus (strain DSM 9941 / JCM 11954 / NBRC 16129 / PRD-1), this protein is Phospho-N-acetylmuramoyl-pentapeptide-transferase.